Here is a 207-residue protein sequence, read N- to C-terminus: Urease accessory protein UreG (207 aa).

A GTP-binding site is contributed by 14–21 (GPVGSGKT).

The protein belongs to the SIMIBI class G3E GTPase family. UreG subfamily. Homodimer. UreD, UreF and UreG form a complex that acts as a GTP-hydrolysis-dependent molecular chaperone, activating the urease apoprotein by helping to assemble the nickel containing metallocenter of UreC. The UreE protein probably delivers the nickel.

The protein localises to the cytoplasm. Its function is as follows. Facilitates the functional incorporation of the urease nickel metallocenter. This process requires GTP hydrolysis, probably effectuated by UreG. The chain is Urease accessory protein UreG from Pseudomonas putida (strain GB-1).